The chain runs to 787 residues: Endonuclease MutS2 (787 aa).

Residue 331 to 338 coordinates ATP; the sequence is GPNTGGKT. Positions 711–786 constitute a Smr domain; the sequence is IDVRGKTSDD…EQGVTIVELR (76 aa).

The protein belongs to the DNA mismatch repair MutS family. MutS2 subfamily. In terms of assembly, homodimer. Binds to stalled ribosomes, contacting rRNA.

In terms of biological role, endonuclease that is involved in the suppression of homologous recombination and thus may have a key role in the control of bacterial genetic diversity. Its function is as follows. Acts as a ribosome collision sensor, splitting the ribosome into its 2 subunits. Detects stalled/collided 70S ribosomes which it binds and splits by an ATP-hydrolysis driven conformational change. Acts upstream of the ribosome quality control system (RQC), a ribosome-associated complex that mediates the extraction of incompletely synthesized nascent chains from stalled ribosomes and their subsequent degradation. Probably generates substrates for RQC. This chain is Endonuclease MutS2, found in Caldicellulosiruptor saccharolyticus (strain ATCC 43494 / DSM 8903 / Tp8T 6331).